Here is a 120-residue protein sequence, read N- to C-terminus: Non-specific lipid-transfer protein 2 (120 aa).

Residues 1–25 form the signal peptide; sequence MATSMKLACVALVMCMVVIAPMAEA. 4 cysteine pairs are disulfide-bonded: C29-C78, C39-C55, C56-C101, and C76-C115.

The protein belongs to the plant LTP family. In terms of tissue distribution, expressed in roots, stem, leaves and tendrils of the mature plant.

In terms of biological role, plant non-specific lipid-transfer proteins transfer phospholipids as well as galactolipids across membranes. May play a role in wax or cutin deposition in the cell walls of expanding epidermal cells and certain secretory tissues. The chain is Non-specific lipid-transfer protein 2 from Pisum sativum (Garden pea).